A 324-amino-acid chain; its full sequence is tRNA pseudouridine synthase B (324 aa).

The Nucleophile role is filled by aspartate 49. Residues 87–107 form a disordered region; the sequence is RSTDDLEGQPTKTSDKRPSRE.

This sequence belongs to the pseudouridine synthase TruB family. Type 1 subfamily.

It carries out the reaction uridine(55) in tRNA = pseudouridine(55) in tRNA. Functionally, responsible for synthesis of pseudouridine from uracil-55 in the psi GC loop of transfer RNAs. The chain is tRNA pseudouridine synthase B from Brucella canis (strain ATCC 23365 / NCTC 10854 / RM-666).